The sequence spans 135 residues: Integration host factor subunit beta (135 aa).

The segment covering 83–92 (GKELRERVDR) has biased composition (basic and acidic residues). The tract at residues 83-135 (GKELRERVDRTVTQGGGMNGNGHAPHGKTGQSQLGSQSPASLHDDGQLNLVRS) is disordered. Polar residues predominate over residues 111-122 (TGQSQLGSQSPA).

It belongs to the bacterial histone-like protein family. Heterodimer of an alpha and a beta chain.

Functionally, this protein is one of the two subunits of integration host factor, a specific DNA-binding protein that functions in genetic recombination as well as in transcriptional and translational control. The polypeptide is Integration host factor subunit beta (Cupriavidus metallidurans (strain ATCC 43123 / DSM 2839 / NBRC 102507 / CH34) (Ralstonia metallidurans)).